The following is a 610-amino-acid chain: MGKILGIDLGTTNSCMAVMEGGEAVVIPNAEGARTTPSVVGFSKKGEKLVGQVAKRQAISNPENTVYSIKRHMGEPNYKVTLQGKHNTPQEISAMILQKLKADAEAYLGEEIKQAVITVPAYFNDAQRQATKDAGTIAGLEVLRIINEPTAASLAYGLDKGEVEQTILVYDLGGGTFDVSILEIGGGVFEVKATSGDTHLGGDDFDQRIVNYLLAEFKKTEGIDLSKDRAVLQRLTDAAEKAKIELSGVASTNINLPFLTVGPDGEPKHLDIDLTRAQFQKMTEDLLEKTLVSMRQALSDAKLTPNDIDKVILIGGATRMPAVVELVENFTGKKPYKNINPDEAVAIGAAIQAGVLGGEVKDILLLDVTPLTLGIETLGGIATPLIPRNTTIPTRKSQIFSTAADNQPSVEIHVLQGERGIASENKTLGRFTLDGIPPAPRGVPQIEVTFDIDANGILHVSAKDLGTGREQSISIQKPGGLTDAEIERMIKDAELHAEEDRKRKEEVETRNNAETLINAAEKTLKEAGDVATEDQKSKVNAAIDDLKKALEGKDAEEIKAKTEALQEAIYPISTAMYQKAAQQAQQAAGGAAGRTDAKGPEETVVDAIMR.

The protein belongs to the heat shock protein 70 family.

In terms of biological role, acts as a chaperone. This Methanosarcina thermophila protein is Chaperone protein DnaK (dnaK).